A 78-amino-acid polypeptide reads, in one-letter code: Large ribosomal subunit protein bL28 (78 aa).

The interval 1–31 (MAAHCQVTGAEPGFGHSISHSHRRNKRRFDP) is disordered.

This sequence belongs to the bacterial ribosomal protein bL28 family.

The chain is Large ribosomal subunit protein bL28 from Paenarthrobacter aurescens (strain TC1).